A 146-amino-acid chain; its full sequence is Hemoglobin subunit beta-1 (146 aa).

A Globin domain is found at 2 to 146 (GLTAHDRQLI…IADALGKGYH (145 aa)). The heme b site is built by His-63 and His-92.

The protein belongs to the globin family. Heterotetramer of two alpha chains and two beta chains. In terms of tissue distribution, red blood cells.

Its function is as follows. Involved in oxygen transport from the lung to the various peripheral tissues. This Xenopus laevis (African clawed frog) protein is Hemoglobin subunit beta-1 (hbb1).